We begin with the raw amino-acid sequence, 368 residues long: C-glycoside deglycosidase alpha subunit (368 aa).

A divalent metal cation is bound at residue Glu145. His147 acts as the Proton acceptor in catalysis. A divalent metal cation-binding residues include Asp177, His275, and Glu311.

The protein belongs to the C-glycoside deglycosidase alpha subunit family. In terms of assembly, heterodimer composed of an alpha subunit (CarB) and a beta subunit (CarC). A divalent metal cation is required as a cofactor.

It catalyses the reaction 3''-dehydroisovitexin = 1,5-anhydro-D-erythro-hex-1-en-3-ulose + apigenin. It carries out the reaction 3''-dehydroisoorientin = 1,5-anhydro-D-erythro-hex-1-en-3-ulose + luteolin. In terms of biological role, carbon-carbon bond-cleaving enzyme which participates in the metabolism of C-glycosides. Acts on the C6-glycosylated compounds 3''-dehydroisovitexin (3''-oxo-isovitexin) and 3''-dehydroisoorientin (3''-oxo-homoorientin). Shows weak activity with 3'-dehydromangiferin (3'-oxo-mangiferin). The chain is C-glycoside deglycosidase alpha subunit from Microbacterium trichothecenolyticum (Aureobacterium trichothecenolyticum).